The following is a 366-amino-acid chain: Chorismate synthase (366 aa).

The NADP(+) site is built by arginine 48 and arginine 54. FMN-binding positions include 125–127 (RSS), 238–239 (NA), glycine 278, 293–297 (KPTSS), and arginine 319.

Belongs to the chorismate synthase family. As to quaternary structure, homotetramer. The cofactor is FMNH2.

It carries out the reaction 5-O-(1-carboxyvinyl)-3-phosphoshikimate = chorismate + phosphate. The protein operates within metabolic intermediate biosynthesis; chorismate biosynthesis; chorismate from D-erythrose 4-phosphate and phosphoenolpyruvate: step 7/7. Its function is as follows. Catalyzes the anti-1,4-elimination of the C-3 phosphate and the C-6 proR hydrogen from 5-enolpyruvylshikimate-3-phosphate (EPSP) to yield chorismate, which is the branch point compound that serves as the starting substrate for the three terminal pathways of aromatic amino acid biosynthesis. This reaction introduces a second double bond into the aromatic ring system. The sequence is that of Chorismate synthase from Neisseria meningitidis serogroup C / serotype 2a (strain ATCC 700532 / DSM 15464 / FAM18).